The sequence spans 161 residues: Endoribonuclease YbeY (161 aa).

3 residues coordinate Zn(2+): His121, His125, and His131.

This sequence belongs to the endoribonuclease YbeY family. Zn(2+) serves as cofactor.

Its subcellular location is the cytoplasm. Functionally, single strand-specific metallo-endoribonuclease involved in late-stage 70S ribosome quality control and in maturation of the 3' terminus of the 16S rRNA. This is Endoribonuclease YbeY from Stenotrophomonas maltophilia (strain R551-3).